Consider the following 372-residue polypeptide: Probable dual-specificity RNA methyltransferase RlmN (372 aa).

The Proton acceptor role is filled by E106. The Radical SAM core domain maps to 112–359; the sequence is YPQRNTVCIS…SCTVRDTRGR (248 aa). Cysteines 119 and 365 form a disulfide. C126, C130, and C133 together coordinate [4Fe-4S] cluster. S-adenosyl-L-methionine contacts are provided by residues 186–187, S220, 243–245, and N322; these read GE and SLH. C365 (S-methylcysteine intermediate) is an active-site residue.

This sequence belongs to the radical SAM superfamily. RlmN family. It depends on [4Fe-4S] cluster as a cofactor.

It is found in the cytoplasm. The enzyme catalyses adenosine(2503) in 23S rRNA + 2 reduced [2Fe-2S]-[ferredoxin] + 2 S-adenosyl-L-methionine = 2-methyladenosine(2503) in 23S rRNA + 5'-deoxyadenosine + L-methionine + 2 oxidized [2Fe-2S]-[ferredoxin] + S-adenosyl-L-homocysteine. It carries out the reaction adenosine(37) in tRNA + 2 reduced [2Fe-2S]-[ferredoxin] + 2 S-adenosyl-L-methionine = 2-methyladenosine(37) in tRNA + 5'-deoxyadenosine + L-methionine + 2 oxidized [2Fe-2S]-[ferredoxin] + S-adenosyl-L-homocysteine. Its function is as follows. Specifically methylates position 2 of adenine 2503 in 23S rRNA and position 2 of adenine 37 in tRNAs. The protein is Probable dual-specificity RNA methyltransferase RlmN of Mycolicibacterium smegmatis (strain ATCC 700084 / mc(2)155) (Mycobacterium smegmatis).